The primary structure comprises 336 residues: DNA-directed RNA polymerase subunit alpha (336 aa).

An alpha N-terminal domain (alpha-NTD) region spans residues 1-238; sequence MNDLDLNLVP…NLFLPFLQAE (238 aa). The tract at residues 267-336 is alpha C-terminal domain (alpha-CTD); sequence AKKVTFQHIF…LQKRFGMRLQ (70 aa).

Belongs to the RNA polymerase alpha chain family. In plastids the minimal PEP RNA polymerase catalytic core is composed of four subunits: alpha, beta, beta', and beta''. When a (nuclear-encoded) sigma factor is associated with the core the holoenzyme is formed, which can initiate transcription.

The protein resides in the plastid. It localises to the chloroplast. It carries out the reaction RNA(n) + a ribonucleoside 5'-triphosphate = RNA(n+1) + diphosphate. In terms of biological role, DNA-dependent RNA polymerase catalyzes the transcription of DNA into RNA using the four ribonucleoside triphosphates as substrates. In Huperzia lucidula (Shining clubmoss), this protein is DNA-directed RNA polymerase subunit alpha.